We begin with the raw amino-acid sequence, 95 residues long: Aspartyl/glutamyl-tRNA(Asn/Gln) amidotransferase subunit C (95 aa).

This sequence belongs to the GatC family. As to quaternary structure, heterotrimer of A, B and C subunits.

It carries out the reaction L-glutamyl-tRNA(Gln) + L-glutamine + ATP + H2O = L-glutaminyl-tRNA(Gln) + L-glutamate + ADP + phosphate + H(+). The catalysed reaction is L-aspartyl-tRNA(Asn) + L-glutamine + ATP + H2O = L-asparaginyl-tRNA(Asn) + L-glutamate + ADP + phosphate + 2 H(+). Allows the formation of correctly charged Asn-tRNA(Asn) or Gln-tRNA(Gln) through the transamidation of misacylated Asp-tRNA(Asn) or Glu-tRNA(Gln) in organisms which lack either or both of asparaginyl-tRNA or glutaminyl-tRNA synthetases. The reaction takes place in the presence of glutamine and ATP through an activated phospho-Asp-tRNA(Asn) or phospho-Glu-tRNA(Gln). The polypeptide is Aspartyl/glutamyl-tRNA(Asn/Gln) amidotransferase subunit C (Cereibacter sphaeroides (strain ATCC 17025 / ATH 2.4.3) (Rhodobacter sphaeroides)).